We begin with the raw amino-acid sequence, 146 residues long: MKTFSAKAHEVKRDWFVVDATDLVLGRLASEIAHRLRGKHKTIYTPHVDTGDYIVVINADKIKVTGNKALDKKYHRHSGYPGGISTTTFGKMQERFPGRALEKAVKGMLPKGPLGYAMFRKLKVYAGDKHDHVAQQPQPLVIQSQA.

The protein belongs to the universal ribosomal protein uL13 family. In terms of assembly, part of the 50S ribosomal subunit.

In terms of biological role, this protein is one of the early assembly proteins of the 50S ribosomal subunit, although it is not seen to bind rRNA by itself. It is important during the early stages of 50S assembly. The polypeptide is Large ribosomal subunit protein uL13 (Methylobacillus flagellatus (strain ATCC 51484 / DSM 6875 / VKM B-1610 / KT)).